The following is a 539-amino-acid chain: Tripartite motif-containing protein 26 (539 aa).

The segment at 16 to 57 (CSICLDYLRDPVTIDCGHVFCRSCTTDVRPISGSRPVCPLCK) adopts an RING-type zinc-finger fold. A B box-type zinc finger spans residues 97–138 (QDAKLCERHREKLHYYCEDDGKLLCVMCRESREHRPHTAVLM). Zn(2+) contacts are provided by Cys-102, His-105, Cys-124, and His-130. A coiled-coil region spans residues 188-227 (IVAEFEQGHQFLREREEHLLEQLAKLEQELTEGREKFKSR). The 245-residue stretch at 295 to 539 (RGLREFQGKL…WPGTRLLLRP (245 aa)) folds into the B30.2/SPRY domain. Residues 376-437 (REGWSEDEEE…EEEEEVLESC (62 aa)) are disordered. Positions 380 to 434 (SEDEEEGDEEEEGEEEEEEEEAGYGDGYDDWETDEDEESLGDEEEEEEEEEEEVL) are enriched in acidic residues.

It belongs to the TRIM/RBCC family. As to quaternary structure, interacts with TBK1; this interaction bridges together TBK1 and NEMO in order to activate TBK1. Interacts with INCA1. In terms of processing, autoubiquitinates upon viral infection. In turn, autoubiquitinated TRIM26 recruits NEMO and bridges TBK1-NEMO interaction.

The protein resides in the cytoplasm. The protein localises to the nucleus. The enzyme catalyses S-ubiquitinyl-[E2 ubiquitin-conjugating enzyme]-L-cysteine + [acceptor protein]-L-lysine = [E2 ubiquitin-conjugating enzyme]-L-cysteine + N(6)-ubiquitinyl-[acceptor protein]-L-lysine.. E3 ubiquitin-protein ligase which regulates the IFN-beta production and antiviral response downstream of various DNA-encoded pattern-recognition receptors (PRRs). Also plays a central role in determining the response to different forms of oxidative stress by controlling levels of DNA glycosylases NEIL1, NEIL3 and NTH1 that are involved in repair of damaged DNA. Promotes nuclear IRF3 ubiquitination and proteasomal degradation. Bridges together TBK1 and NEMO during the innate response to viral infection leading to the activation of TBK1. Positively regulates LPS-mediated inflammatory innate immune response by catalyzing the 'Lys-11'-linked polyubiquitination of TAB1 to enhance its activation and subsequent NF-kappa-B and MAPK signaling. In a manner independent of its catalytic activity, inhibits WWP2, a SOX2-directed E3 ubiquitin ligase, and thus protects SOX2 from polyubiquitination and proteasomal degradation. Ubiquitinates the histone acetyltransferase protein complex component PHF20 and thereby triggers its degradation in the nucleus after its recruitment by the histone demethylase KDM6B, serving as a scaffold protein. Upon induction by TGF-beta, ubiquitinates the TFIID component TAF7 for proteasomal degradation. Induces ferroptosis by ubiquitinating SLC7A11, a critical protein for lipid reactive oxygen species (ROS) scavenging. Inhibits directly hepatitis B virus replication by mediating HBX ubiquitination and subsequent degradation. In terms of biological role, (Microbial infection) Promotes herpes simplex virus type 2/HHV-2 infection in vaginal epithelial cells by decreasing the nuclear localization of IRF3, the primary mediator of type I interferon activation. This is Tripartite motif-containing protein 26 (TRIM26) from Homo sapiens (Human).